The primary structure comprises 237 residues: Uridylate kinase (237 aa).

11–14 provides a ligand contact to ATP; it reads KLSG. Glycine 53 is a binding site for UMP. Glycine 54 and arginine 58 together coordinate ATP. UMP is bound by residues aspartate 73 and 134–141; that span reads TGNPFFTT. The ATP site is built by threonine 161, tyrosine 167, and aspartate 170.

The protein belongs to the UMP kinase family. As to quaternary structure, homohexamer.

The protein localises to the cytoplasm. The enzyme catalyses UMP + ATP = UDP + ADP. It functions in the pathway pyrimidine metabolism; CTP biosynthesis via de novo pathway; UDP from UMP (UMPK route): step 1/1. With respect to regulation, inhibited by UTP. Its function is as follows. Catalyzes the reversible phosphorylation of UMP to UDP. This chain is Uridylate kinase, found in Burkholderia vietnamiensis (strain G4 / LMG 22486) (Burkholderia cepacia (strain R1808)).